The chain runs to 503 residues: Envelope glycoprotein p57 (503 aa).

A signal peptide spans 1 to 22 (MQLSMSFLIGFGTLVLALSART). The Extracellular segment spans residues 23 to 467 (FDLQGLSCNT…FLNPLGWLRD (445 aa)). Residues Asn-63, Asn-109, Asn-139, Asn-192, Asn-196, Asn-202, Asn-221, Asn-230, and Asn-235 are each glycosylated (N-linked (GlcNAc...) asparagine; by host). A fusion peptide region spans residues 274-315 (ILQSLLLGVFGTGIASASQFLRGWLNHPDIIGYIVNGVGVVW). 4 N-linked (GlcNAc...) asparagine; by host glycosylation sites follow: Asn-321, Asn-328, Asn-388, and Asn-438. The helical transmembrane segment at 468–488 (LLAWAAWLGGVLYLISLCVSL) threads the bilayer. Residues 489–503 (PASFARRRRLGRWQE) are Cytoplasmic-facing.

In terms of processing, glycosated; Stabilizes it. A portion of p57 is cleaved into p27 and p29. p27 and p29 are called gp43 when glycosylated, as they seem to have the same molecular weight.

The protein localises to the host endoplasmic reticulum membrane. It is found in the virion. The protein resides in the host cell membrane. In terms of biological role, unprocessed envelope protein p57 is thought to be involved in attachment of the virus to its cell surface receptor. This attachment induces virion internalization predominantly through clathrin-dependent endocytosis. Its function is as follows. Envelope protein p27 and p29 presumably linked by disulfide bond are the viral type II fusion protein, involved in pH-dependent fusion within early endosomes after internalization of the virion by endocytosis. In Borna disease virus 1 (BoDV-1), this protein is Envelope glycoprotein p57 (G).